The following is a 215-amino-acid chain: MSDNAQLSGLCDRFRGFYPVVIDVETAGFNAKTDALLEVAAITLKMDEQGWLMPDTTLHFHVEPFEGANLQPEALAFNGIDPSNPLRGAVSEYDALHAIFKMVRKGIKDSGCNRAIMVAHNATFDHSFMMAAAERASLKRNPFHPFVTFDTAALSGLALGQTVLSKACLAAGMEFDGTQAHSALYDTERTAVLFCEIVNRWKRLGGWPLPVPEEA.

Residues 20–194 (VVIDVETAGF…YDTERTAVLF (175 aa)) form the Exonuclease domain. Mg(2+)-binding residues include aspartate 23, glutamate 25, histidine 181, and aspartate 186. The Proton donor/acceptor role is filled by histidine 181.

Belongs to the RNase T family. As to quaternary structure, homodimer. It depends on Mg(2+) as a cofactor.

Its function is as follows. Trims short 3' overhangs of a variety of RNA species, leaving a one or two nucleotide 3' overhang. Responsible for the end-turnover of tRNA: specifically removes the terminal AMP residue from uncharged tRNA (tRNA-C-C-A). Also appears to be involved in tRNA biosynthesis. This is Ribonuclease T from Citrobacter koseri (strain ATCC BAA-895 / CDC 4225-83 / SGSC4696).